A 636-amino-acid polypeptide reads, in one-letter code: MGKSSKKSVTEVETPASMTKPLKKGKRDAEEDLDMQVTKKQKKELIDVVQKEKAEKTVPKKVESSSSDASDSDEEEKTKETPSKLKDESSSEEEDDSSSDEEIAPAKKRPEPIKKAKVESSSSDDDSTSDEETAPVKKQPAVLEKAKVESSSSDDDSSSDEETVPVKKQPAVLEKAKIESSSSDDDSSSDEETVPMKKQTAVLEKAKAESSSSDDGSSSDEEPTPAKKEPIVVKKDSSDESSSDEETPVVKKKPTTVVKDAKAESSSSEEESSSDDEPTPAKKPTVVKNAKPAAKDSSSSEEDSDEEESDDEKPPTKKAKVSSKTSKQESSSDESSDESDKEESKDEKVTPKKKDSDVEMVDAEQKSNAKQPKTPTNQTQGGSKTLFAGNLSYQIARSDIENFFKEAGEVVDVRLSSFDDGSFKGYGHIEFASPEEAQKALEMNGKLLLGRDVRLDLANERGTPRNSNPGRKGEGSQSRTIYVRGFSSSLGEDEIKKELRSHFSKCGEVTRVHVPTDRETGASRGFAYIDLTSGFDEALQLSGSEIGGGNIHVEESRPRDSDEGRSSNRAPARGAPRGRHSDRAPRGGRFSDRAPRGRHSDRGAPRGRFSTRGRGPSKPSVMESSKGTKTVFNDEE.

Disordered regions lie at residues M1–L386, A458–I481, and S544–E636. 2 stretches are compositionally biased toward basic and acidic residues: residues K43–E63 and E76–S89. Residues S90–I103 are compositionally biased toward acidic residues. The segment covering A104–V118 has biased composition (basic and acidic residues). Acidic residues-rich tracts occupy residues S122–T133, S152–T163, and S182–T193. Basic and acidic residues predominate over residues T224–S238. Composition is skewed to acidic residues over residues S267–P278, S299–D311, and S331–K341. Positions E342 to S367 are enriched in basic and acidic residues. The span at N368–S383 shows a compositional bias: polar residues. RRM domains are found at residues K384–E460 and R479–P558. The span at P464–I481 shows a compositional bias: polar residues. Composition is skewed to basic and acidic residues over residues H552 to S566 and R579 to A604. Residues M622–E636 show a composition bias toward polar residues.

As to quaternary structure, interacts with THAL in the nucleus. In terms of tissue distribution, expressed at low levels in flower buds.

The protein localises to the nucleus. Its subcellular location is the nucleolus. Involved in pre-rRNA processing and ribosome assembly. The protein is Nucleolin 2 of Arabidopsis thaliana (Mouse-ear cress).